The following is a 99-amino-acid chain: Plastocyanin (99 aa).

One can recognise a Plastocyanin-like domain in the interval 1 to 99 (VEVLMGGSGG…IGMSGIVTVN (99 aa)). 4 residues coordinate Cu cation: histidine 37, cysteine 84, histidine 87, and methionine 92.

It belongs to the plastocyanin family. It depends on Cu(2+) as a cofactor.

It is found in the plastid. It localises to the chloroplast thylakoid membrane. Participates in electron transfer between P700 and the cytochrome b6-f complex in photosystem I. The chain is Plastocyanin (PETE) from Ginkgo biloba (Ginkgo).